We begin with the raw amino-acid sequence, 514 residues long: Maturase K (514 aa).

Belongs to the intron maturase 2 family. MatK subfamily.

The protein resides in the plastid. It localises to the chloroplast. Usually encoded in the trnK tRNA gene intron. Probably assists in splicing its own and other chloroplast group II introns. The chain is Maturase K from Encephalartos altensteinii (Altenstein's bread tree).